A 55-amino-acid chain; its full sequence is ATP synthase F(0) complex subunit 8 (55 aa).

A helical transmembrane segment spans residues 4–24 (LNPHPWFSIFITSWLILIIIL).

Belongs to the ATPase protein 8 family. As to quaternary structure, component of the ATP synthase complex composed at least of ATP5F1A/subunit alpha, ATP5F1B/subunit beta, ATP5MC1/subunit c (homooctomer), MT-ATP6/subunit a, MT-ATP8/subunit 8, ATP5ME/subunit e, ATP5MF/subunit f, ATP5MG/subunit g, ATP5MK/subunit k, ATP5MJ/subunit j, ATP5F1C/subunit gamma, ATP5F1D/subunit delta, ATP5F1E/subunit epsilon, ATP5PF/subunit F6, ATP5PB/subunit b, ATP5PD/subunit d, ATP5PO/subunit OSCP. ATP synthase complex consists of a soluble F(1) head domain (subunits alpha(3) and beta(3)) - the catalytic core - and a membrane F(0) domain - the membrane proton channel (subunits c, a, 8, e, f, g, k and j). These two domains are linked by a central stalk (subunits gamma, delta, and epsilon) rotating inside the F1 region and a stationary peripheral stalk (subunits F6, b, d, and OSCP).

The protein localises to the mitochondrion membrane. Functionally, subunit 8, of the mitochondrial membrane ATP synthase complex (F(1)F(0) ATP synthase or Complex V) that produces ATP from ADP in the presence of a proton gradient across the membrane which is generated by electron transport complexes of the respiratory chain. ATP synthase complex consist of a soluble F(1) head domain - the catalytic core - and a membrane F(1) domain - the membrane proton channel. These two domains are linked by a central stalk rotating inside the F(1) region and a stationary peripheral stalk. During catalysis, ATP synthesis in the catalytic domain of F(1) is coupled via a rotary mechanism of the central stalk subunits to proton translocation. In vivo, can only synthesize ATP although its ATP hydrolase activity can be activated artificially in vitro. Part of the complex F(0) domain. The chain is ATP synthase F(0) complex subunit 8 from Pelomedusa subrufa (African side-necked turtle).